Here is a 310-residue protein sequence, read N- to C-terminus: MKPKIFIDGEHGTTGLQIRTRLAERDDLEVISIPEAERRNKDLRADYLRAADIAILCLPDDASKEAVSLLEGHNSTRIIDTSTAHRVHPDWAYGFAELAKGQRERIAEARLVANPGCYPTGAIALVRPLCDAGLLPADYPVSVNAVSGYTGGGKQLIAQMEDRNHPDYLAANNFLYGLPLKHKHVPELQLHGRLDRRPIFSPSVGRFPQGMIVQVPLFLSELEGSPSLAKVHAVLTEHYAGQDIVEVVPLEESAKLPRVDAEELAGKDGMKLFVFGTEDHGQVNLVALLDNLGKGASGAAVQNMNLMLGK.

The active site involves Cys117.

It belongs to the NAGSA dehydrogenase family. Type 2 subfamily.

It is found in the cytoplasm. It catalyses the reaction N-acetyl-L-glutamate 5-semialdehyde + phosphate + NADP(+) = N-acetyl-L-glutamyl 5-phosphate + NADPH + H(+). It participates in amino-acid biosynthesis; L-arginine biosynthesis; N(2)-acetyl-L-ornithine from L-glutamate: step 3/4. In terms of biological role, catalyzes the NADPH-dependent reduction of N-acetyl-5-glutamyl phosphate to yield N-acetyl-L-glutamate 5-semialdehyde. In Brucella ovis (strain ATCC 25840 / 63/290 / NCTC 10512), this protein is N-acetyl-gamma-glutamyl-phosphate reductase.